The primary structure comprises 337 residues: Eukaryotic translation initiation factor 3 subunit H (337 aa).

Residues 21–153 (VQCDGLAVMK…LKAYRLTPQA (133 aa)) form the MPN domain.

The protein belongs to the eIF-3 subunit H family. As to quaternary structure, component of the eukaryotic translation initiation factor 3 (eIF-3) complex. The eIF-3 complex interacts with pix. Interacts with mxt.

It is found in the cytoplasm. In terms of biological role, component of the eukaryotic translation initiation factor 3 (eIF-3) complex, which is involved in protein synthesis of a specialized repertoire of mRNAs and, together with other initiation factors, stimulates binding of mRNA and methionyl-tRNAi to the 40S ribosome. The eIF-3 complex specifically targets and initiates translation of a subset of mRNAs involved in cell proliferation. The protein is Eukaryotic translation initiation factor 3 subunit H of Drosophila virilis (Fruit fly).